The following is a 205-amino-acid chain: High frequency lysogenization protein HflD homolog (205 aa).

Belongs to the HflD family.

It localises to the cytoplasm. The protein localises to the cell inner membrane. This chain is High frequency lysogenization protein HflD homolog, found in Vibrio atlanticus (strain LGP32) (Vibrio splendidus (strain Mel32)).